The primary structure comprises 35 residues: Beta-theraphotoxin-Hlv1a (35 aa).

3 disulfide bridges follow: Cys2-Cys17, Cys9-Cys24, and Cys16-Cys31.

It belongs to the neurotoxin 10 (Hwtx-1) family. 10 (haplotoxin-1) subfamily. As to expression, expressed by the venom gland.

The protein localises to the secreted. Spider venom neurotoxin that blocks voltage-gated sodium channel Nav1.3/SCN3A in human (IC(50)=1 uM) and rat (IC(50)=1 uM). This is Beta-theraphotoxin-Hlv1a from Cyriopagopus lividus (Cobalt blue tarantula).